The following is a 260-amino-acid chain: MEKKRFVLVHAVCHGAWSWYKVKTKLEAAGHCVTAVDLAASGINMTIVEEIQTLMDYSKPLLNFMSSLGSDDDKVILVAHSMGGIPAALAADIFSCKISAVVFLAAFMPDTRNPPAYVFEKLIRSIPREEWLDTAFGRYGNPDCPLESALLGPKFMAKKVYQRSPIEDLELAKMLVRVNPLVTNNLAGARSFTGEGYGSVTRIYIISGEDNILPEDYQRWMIRNFPVKEVMEIKDADHMAMFSKPKELCALLLEIADKYA.

Catalysis depends on Ser-81, which acts as the Acyl-ester intermediate. Catalysis depends on charge relay system residues Asp-210 and His-238.

It belongs to the AB hydrolase superfamily. Methylesterase family.

Putative methylesterase. This chain is Putative methylesterase 19, found in Arabidopsis thaliana (Mouse-ear cress).